The chain runs to 196 residues: Cell division protein SepF (196 aa).

The interval 15 to 80 (VEDDEEFNEP…PKRSASTFSK (66 aa)) is disordered. Residues 56-79 (RPAQSTPKPQAQTAAPKRSASTFS) show a composition bias toward polar residues.

The protein belongs to the SepF family. In terms of assembly, homodimer. Interacts with FtsZ.

Its subcellular location is the cytoplasm. Functionally, cell division protein that is part of the divisome complex and is recruited early to the Z-ring. Probably stimulates Z-ring formation, perhaps through the cross-linking of FtsZ protofilaments. Its function overlaps with FtsA. This Lactococcus lactis subsp. cremoris (strain SK11) protein is Cell division protein SepF.